The primary structure comprises 314 residues: Putative S-adenosyl-L-methionine-dependent methyltransferase MUL_4402 (314 aa).

Residues aspartate 132 and 161-162 (DL) contribute to the S-adenosyl-L-methionine site. The interval 291–314 (RPVPDDAEGPVPPTLFVSAHRPAA) is disordered.

It belongs to the UPF0677 family.

Functionally, exhibits S-adenosyl-L-methionine-dependent methyltransferase activity. The polypeptide is Putative S-adenosyl-L-methionine-dependent methyltransferase MUL_4402 (Mycobacterium ulcerans (strain Agy99)).